A 159-amino-acid polypeptide reads, in one-letter code: Cyclic pyranopterin monophosphate synthase (159 aa).

Substrate contacts are provided by residues 75-77 and 113-114; these read LCH and ME. The active site involves aspartate 128.

Belongs to the MoaC family. In terms of assembly, homohexamer; trimer of dimers.

It catalyses the reaction (8S)-3',8-cyclo-7,8-dihydroguanosine 5'-triphosphate = cyclic pyranopterin phosphate + diphosphate. Its pathway is cofactor biosynthesis; molybdopterin biosynthesis. Its function is as follows. Catalyzes the conversion of (8S)-3',8-cyclo-7,8-dihydroguanosine 5'-triphosphate to cyclic pyranopterin monophosphate (cPMP). In Cupriavidus metallidurans (strain ATCC 43123 / DSM 2839 / NBRC 102507 / CH34) (Ralstonia metallidurans), this protein is Cyclic pyranopterin monophosphate synthase.